The primary structure comprises 439 residues: MLSKLASLQTVAALRRGLRTSVASATSVATKKTEQGPPSSEYIFERESKYGAHNYHPLPVALERGKGIYMWDVEGRQYFDFLSAYGAVSQGHCHPKIIEAMKSQVDKLTLTSRAFYNNVLGEYEEYITKLFNYNKVLPMNTGVEAGETACKLARRWGYTVKGIQKYKAKIVFAVGNFWGRTLSAVSSSTDPTSYDGFGPFMPGFETIPYNDLPALERALQDPNVAAFMVEPIQGEAGVIVPDPGYLTGVRELCTRHQVLFIADEIQTGLARTGRWLAVDHENVRPDIVLLGKALSGGLYPVSAVLCDDDIMLTIKPGEHGSTYGGNPLGCRIAIAALEVLEEEHLAENADKMGAILRKELMKLPSDVVTAVRGKGLLNAIVIRETKDCDAWKVCLRLRDNGLLAKPTHGDIIRLAPPLVIKEDEIRESVEIINKTILSF.

The transit peptide at 1–35 (MLSKLASLQTVAALRRGLRTSVASATSVATKKTEQ) directs the protein to the mitochondrion. N6-acetyllysine is present on residues K49 and K66. K102 is subject to N6-succinyllysine. K107 carries the N6-acetyllysine; alternate modification. K107 carries the post-translational modification N6-succinyllysine; alternate. An N6-(pyridoxal phosphate)lysine modification is found at K292. At K362 the chain carries N6-acetyllysine; alternate. N6-succinyllysine; alternate is present on K362. 2 positions are modified to N6-acetyllysine: K386 and K392. K405 is modified (N6-acetyllysine; alternate). N6-succinyllysine; alternate is present on K405. N6-acetyllysine is present on K421.

Homohexamer. Pyridoxal 5'-phosphate serves as cofactor. In terms of tissue distribution, expressed in the head and flagellum of epididymal sperm but not in testicular sperm (at protein level).

The protein resides in the mitochondrion matrix. It catalyses the reaction L-ornithine + 2-oxoglutarate = L-glutamate 5-semialdehyde + L-glutamate. Its pathway is amino-acid biosynthesis; L-proline biosynthesis; L-glutamate 5-semialdehyde from L-ornithine: step 1/1. In terms of biological role, catalyzes the reversible interconversion of L-ornithine and 2-oxoglutarate to L-glutamate semialdehyde and L-glutamate. The sequence is that of Ornithine aminotransferase, mitochondrial (Oat) from Rattus norvegicus (Rat).